The chain runs to 122 residues: Small ribosomal subunit protein uS13 (122 aa).

The disordered stretch occupies residues 97–122 (PVRGQRTHTNAKTRKGRSRLPIAGKK).

This sequence belongs to the universal ribosomal protein uS13 family. Part of the 30S ribosomal subunit. Forms a loose heterodimer with protein S19. Forms two bridges to the 50S subunit in the 70S ribosome.

Functionally, located at the top of the head of the 30S subunit, it contacts several helices of the 16S rRNA. In the 70S ribosome it contacts the 23S rRNA (bridge B1a) and protein L5 of the 50S subunit (bridge B1b), connecting the 2 subunits; these bridges are implicated in subunit movement. Contacts the tRNAs in the A and P-sites. The chain is Small ribosomal subunit protein uS13 from Wolbachia pipientis wMel.